The following is a 257-amino-acid chain: tRNA pseudouridine synthase A (257 aa).

Residue D53 is the Nucleophile of the active site. A substrate-binding site is contributed by Y111.

This sequence belongs to the tRNA pseudouridine synthase TruA family. Homodimer.

It catalyses the reaction uridine(38/39/40) in tRNA = pseudouridine(38/39/40) in tRNA. Its function is as follows. Formation of pseudouridine at positions 38, 39 and 40 in the anticodon stem and loop of transfer RNAs. This is tRNA pseudouridine synthase A from Xanthomonas oryzae pv. oryzae (strain MAFF 311018).